The chain runs to 624 residues: Adenine deaminase 1 (624 aa).

Belongs to the metallo-dependent hydrolases superfamily. Adenine deaminase family. Mn(2+) serves as cofactor.

It carries out the reaction adenine + H2O + H(+) = hypoxanthine + NH4(+). The protein is Adenine deaminase 1 of Bradyrhizobium sp. (strain ORS 278).